Reading from the N-terminus, the 103-residue chain is MYAVFQSGGKQHRVAEGHTVRLEKLEVATGETVEFDQVLLIADGETVHVGAPLVAGGKVVAEVVGHGRGEKVTIIKFRRRKHHDKKMGHRQWFTEVKITAISA.

It belongs to the bacterial ribosomal protein bL21 family. In terms of assembly, part of the 50S ribosomal subunit. Contacts protein L20.

Functionally, this protein binds to 23S rRNA in the presence of protein L20. The polypeptide is Large ribosomal subunit protein bL21 (Shewanella frigidimarina (strain NCIMB 400)).